A 110-amino-acid chain; its full sequence is Large ribosomal subunit protein uL22 (110 aa).

Belongs to the universal ribosomal protein uL22 family. In terms of assembly, part of the 50S ribosomal subunit.

Functionally, this protein binds specifically to 23S rRNA; its binding is stimulated by other ribosomal proteins, e.g. L4, L17, and L20. It is important during the early stages of 50S assembly. It makes multiple contacts with different domains of the 23S rRNA in the assembled 50S subunit and ribosome. Its function is as follows. The globular domain of the protein is located near the polypeptide exit tunnel on the outside of the subunit, while an extended beta-hairpin is found that lines the wall of the exit tunnel in the center of the 70S ribosome. The polypeptide is Large ribosomal subunit protein uL22 (Shewanella denitrificans (strain OS217 / ATCC BAA-1090 / DSM 15013)).